Consider the following 231-residue polypeptide: Phosphatidylserine decarboxylase proenzyme (231 aa).

The active-site Schiff-base intermediate with substrate; via pyruvic acid is S188. A Pyruvic acid (Ser); by autocatalysis modification is found at S188.

It belongs to the phosphatidylserine decarboxylase family. PSD-A subfamily. In terms of assembly, heterodimer of a large membrane-associated beta subunit and a small pyruvoyl-containing alpha subunit. Requires pyruvate as cofactor. Post-translationally, is synthesized initially as an inactive proenzyme. Formation of the active enzyme involves a self-maturation process in which the active site pyruvoyl group is generated from an internal serine residue via an autocatalytic post-translational modification. Two non-identical subunits are generated from the proenzyme in this reaction, and the pyruvate is formed at the N-terminus of the alpha chain, which is derived from the carboxyl end of the proenzyme. The post-translation cleavage follows an unusual pathway, termed non-hydrolytic serinolysis, in which the side chain hydroxyl group of the serine supplies its oxygen atom to form the C-terminus of the beta chain, while the remainder of the serine residue undergoes an oxidative deamination to produce ammonia and the pyruvoyl prosthetic group on the alpha chain.

It is found in the cell membrane. It carries out the reaction a 1,2-diacyl-sn-glycero-3-phospho-L-serine + H(+) = a 1,2-diacyl-sn-glycero-3-phosphoethanolamine + CO2. It functions in the pathway phospholipid metabolism; phosphatidylethanolamine biosynthesis; phosphatidylethanolamine from CDP-diacylglycerol: step 2/2. In terms of biological role, catalyzes the formation of phosphatidylethanolamine (PtdEtn) from phosphatidylserine (PtdSer). In Rickettsia akari (strain Hartford), this protein is Phosphatidylserine decarboxylase proenzyme.